The chain runs to 309 residues: Taste receptor type 2 member 46 (309 aa).

M1 is a topological domain (extracellular). A helical transmembrane segment spans residues 2–22 (ITFLPITFSILIVVIFFIGNF). Residues 23–46 (ANGFIALINSIEWVKRQKISFAGQ) lie on the Cytoplasmic side of the membrane. A helical transmembrane segment spans residues 47 to 67 (ILTALAVSRVGLLWVLSLHWY). Over 68–86 (ATEFNLAFHSVEVRSTAYN) the chain is Extracellular. The helical transmembrane segment at 87–107 (VWVVTNHFSNWLSTSLSMFYL) threads the bilayer. Over 108–126 (LRIATFSNLIFLHLNRRVK) the chain is Cytoplasmic. The helical transmembrane segment at 127 to 147 (SVILVTLLGPLLFLVCQLFVM) threads the bilayer. Residues 148-178 (NMNQIVRTKEYEGNMTWKIKLKSAMYLSNTT) are Extracellular-facing. N161 and N176 each carry an N-linked (GlcNAc...) asparagine glycan. The helical transmembrane segment at 179-199 (VAMLANFVPLTLTLISFLLLI) threads the bilayer. At 200–229 (CSLCKHLKKMRVHGKGSQDPSTKVHTKALQ) the chain is on the cytoplasmic side. A helical transmembrane segment spans residues 230 to 250 (IVTSFLLVCAIYFLSIILSVW). At 251-259 (NSGGLENKP) the chain is on the extracellular side. Residues 260 to 280 (FFMFCQAIKFSYPSTHPFILI) form a helical membrane-spanning segment. Residues 281–309 (WGNKTLKQTFLSVLRNVRYWVKGQKPSSP) lie on the Cytoplasmic side of the membrane.

Belongs to the G-protein coupled receptor T2R family.

It localises to the membrane. The protein localises to the cell projection. The protein resides in the cilium membrane. Its function is as follows. Receptor that may play a role in the perception of bitterness and is gustducin-linked. May play a role in sensing the chemical composition of the gastrointestinal content. The activity of this receptor may stimulate alpha gustducin, mediate PLC-beta-2 activation and lead to the gating of TRPM5. In airway epithelial cells, binding of bitter compounds increases the intracellular calcium ion concentration and stimulates ciliary beat frequency. The sequence is that of Taste receptor type 2 member 46 (TAS2R46) from Papio hamadryas (Hamadryas baboon).